Here is a 631-residue protein sequence, read N- to C-terminus: tRNA uridine 5-carboxymethylaminomethyl modification enzyme MnmG (631 aa).

FAD is bound by residues 15-20, V127, and S182; that span reads GGGHAG. 275 to 289 lines the NAD(+) pocket; it reads GPRYCPSIEDKIVRF. Position 372 (Q372) interacts with FAD.

The protein belongs to the MnmG family. As to quaternary structure, homodimer. Heterotetramer of two MnmE and two MnmG subunits. FAD is required as a cofactor.

It is found in the cytoplasm. NAD-binding protein involved in the addition of a carboxymethylaminomethyl (cmnm) group at the wobble position (U34) of certain tRNAs, forming tRNA-cmnm(5)s(2)U34. The protein is tRNA uridine 5-carboxymethylaminomethyl modification enzyme MnmG of Buchnera aphidicola subsp. Schizaphis graminum (strain Sg).